Here is a 611-residue protein sequence, read N- to C-terminus: Dihydroxy-acid dehydratase (611 aa).

Position 81 (D81) interacts with Mg(2+). C122 is a [2Fe-2S] cluster binding site. Mg(2+) contacts are provided by D123 and K124. The residue at position 124 (K124) is an N6-carboxylysine. C195 is a binding site for [2Fe-2S] cluster. E491 contacts Mg(2+). S517 functions as the Proton acceptor in the catalytic mechanism.

The protein belongs to the IlvD/Edd family. Homodimer. [2Fe-2S] cluster is required as a cofactor. It depends on Mg(2+) as a cofactor.

It carries out the reaction (2R)-2,3-dihydroxy-3-methylbutanoate = 3-methyl-2-oxobutanoate + H2O. The enzyme catalyses (2R,3R)-2,3-dihydroxy-3-methylpentanoate = (S)-3-methyl-2-oxopentanoate + H2O. Its pathway is amino-acid biosynthesis; L-isoleucine biosynthesis; L-isoleucine from 2-oxobutanoate: step 3/4. It functions in the pathway amino-acid biosynthesis; L-valine biosynthesis; L-valine from pyruvate: step 3/4. In terms of biological role, functions in the biosynthesis of branched-chain amino acids. Catalyzes the dehydration of (2R,3R)-2,3-dihydroxy-3-methylpentanoate (2,3-dihydroxy-3-methylvalerate) into 2-oxo-3-methylpentanoate (2-oxo-3-methylvalerate) and of (2R)-2,3-dihydroxy-3-methylbutanoate (2,3-dihydroxyisovalerate) into 2-oxo-3-methylbutanoate (2-oxoisovalerate), the penultimate precursor to L-isoleucine and L-valine, respectively. The protein is Dihydroxy-acid dehydratase of Actinobacillus pleuropneumoniae serotype 5b (strain L20).